The sequence spans 230 residues: Endonuclease NucS (230 aa).

It belongs to the NucS endonuclease family.

It is found in the cytoplasm. In terms of biological role, cleaves both 3' and 5' ssDNA extremities of branched DNA structures. In Corynebacterium glutamicum (strain ATCC 13032 / DSM 20300 / JCM 1318 / BCRC 11384 / CCUG 27702 / LMG 3730 / NBRC 12168 / NCIMB 10025 / NRRL B-2784 / 534), this protein is Endonuclease NucS.